The following is a 343-amino-acid chain: Hydroxycarboxylic acid receptor 1 (343 aa).

Topologically, residues 1–21 (MDNGSCCLIEGEPISQVMPPL) are extracellular. An N-linked (GlcNAc...) asparagine glycan is attached at N3. The chain crosses the membrane as a helical span at residues 22–42 (LILVFVLGALGNGIALCGFCF). Topologically, residues 43 to 49 (HMKTWKS) are cytoplasmic. Residues 50–70 (STIYLFNLAVADFLLMICLPL) traverse the membrane as a helical segment. Topologically, residues 71 to 90 (RTDYYLRRRHWIFGDIACRL) are extracellular. A disulfide bond links C88 and C165. The chain crosses the membrane as a helical span at residues 91–111 (VLFKLAMNRAGSIVFLTVVAV). The Cytoplasmic segment spans residues 112-131 (DRYFKVVHPHHMVNAISNRT). A helical membrane pass occupies residues 132 to 152 (AAATACVLWTLVILGTVYLLM). The Extracellular segment spans residues 153-182 (ESHLCVQGTLSSCESFIMESANGWHDVMFQ). The chain crosses the membrane as a helical span at residues 183–203 (LEFFLPLTIILFCSVNVVWSL). The Cytoplasmic segment spans residues 204–220 (RRRQQLTRQARMRRATR). Residues 221 to 241 (FIMVVASVFITCYLPSVLARL) traverse the membrane as a helical segment. Over 242–259 (YFLWTVPTSACDPSVHTA) the chain is Extracellular. The chain crosses the membrane as a helical span at residues 260 to 280 (LHVTLSFTYLNSMLDPLVYYF). The Cytoplasmic portion of the chain corresponds to 281–343 (SSPSLPKFYT…SDGQWDLQVC (63 aa)). The segment covering 319–334 (CSKSSIDGANRSQRPS) has biased composition (polar residues). The interval 319-343 (CSKSSIDGANRSQRPSDGQWDLQVC) is disordered.

It belongs to the G-protein coupled receptor 1 family. In terms of tissue distribution, highly expressed in subcutaneous fat and omental fat and detectable in lower levels in brain and many other tissues. High levels detected in epididymal and subcutaneous fat with slightly lower in omental fat, low levels are detected in the brain, skeletal muscle, kidney, liver and the pancreas (at protein level).

The protein resides in the cell membrane. Functionally, acts as a receptor for L-lactate and mediates its anti-lipolytic effect through a G(i)-protein-mediated pathway. The protein is Hydroxycarboxylic acid receptor 1 (Hcar1) of Mus musculus (Mouse).